The sequence spans 963 residues: VPS35 endosomal protein-sorting factor-like (963 aa).

Residues serine 43–leucine 69 are disordered. Over residues serine 53–leucine 69 the composition is skewed to low complexity. Serine 265 carries the post-translational modification Phosphoserine. A helical transmembrane segment spans residues alanine 703–phenylalanine 719.

The protein belongs to the VPS35L family. Component of the heterotrimeric retriever complex formed by VPS26C, VPS29 and VPS35L. Interacts with VPS29. Interacts with COMMD1, CCDC93 and CCDC22; associates with the CCC (COMMD/CCDC22/CCDC93) complex which contains at least COMMD1 (and possibly other COMM domain-containing proteins), CCDC22 and CCDC93. Interacts with WASHC1, WASHC2A and WASHC2C. Interacts with SNX17 and SNX31.

The protein resides in the membrane. It is found in the endosome. In terms of biological role, acts as a component of the retriever complex. The retriever complex is a heterotrimeric complex related to retromer cargo-selective complex (CSC) and essential for retromer-independent retrieval and recycling of numerous cargos such as integrin alpha-5/beta-1 (ITGA5:ITGB1). The recruitment of the retriever complex to the endosomal membrane involves CCC and WASH complexes. In the endosomes, drives the retrieval and recycling of NxxY-motif-containing cargo proteins by coupling to SNX17, a cargo essential for the homeostatic maintenance of numerous cell surface proteins associated with processes that include cell migration, cell adhesion, nutrient supply and cell signaling. Involved in copper-dependent ATP7A trafficking between the trans-Golgi network and vesicles in the cell periphery; the function is proposed to depend on its association with the CCC complex and cooperation with the WASH complex on early endosomes. Seems not to be required for CCC complex stability. Its function is as follows. (Microbial infection) The heterotrimeric retriever complex, in collaboration with the CCC complex, mediates the exit of human papillomavirus to the cell surface. The polypeptide is VPS35 endosomal protein-sorting factor-like (Homo sapiens (Human)).